The following is a 418-amino-acid chain: Putative FBD-associated F-box protein At5g56560 (418 aa).

In terms of domain architecture, F-box spans 4–60 (QTRLSDLPDELLLKILSALPMFKVTLATRLISRRWKGPWKLVPDVTFDDDDIPFKSF). Positions 340 to 390 (LWEEPAVVAKCLSEHLEIFEWRQYEGTEQERNVAGYILANATCLKMATFST) constitute an FBD domain.

In Arabidopsis thaliana (Mouse-ear cress), this protein is Putative FBD-associated F-box protein At5g56560.